The primary structure comprises 421 residues: Glutamyl-tRNA reductase (421 aa).

Substrate contacts are provided by residues 49–52 (TCNR), serine 109, 114–116 (EPQ), and glutamine 120. The Nucleophile role is filled by cysteine 50. Position 189–194 (189–194 (GLGQIG)) interacts with NADP(+).

It belongs to the glutamyl-tRNA reductase family. Homodimer.

The catalysed reaction is (S)-4-amino-5-oxopentanoate + tRNA(Glu) + NADP(+) = L-glutamyl-tRNA(Glu) + NADPH + H(+). The protein operates within porphyrin-containing compound metabolism; protoporphyrin-IX biosynthesis; 5-aminolevulinate from L-glutamyl-tRNA(Glu): step 1/2. In terms of biological role, catalyzes the NADPH-dependent reduction of glutamyl-tRNA(Glu) to glutamate 1-semialdehyde (GSA). This Limosilactobacillus reuteri (strain DSM 20016) (Lactobacillus reuteri) protein is Glutamyl-tRNA reductase.